A 72-amino-acid polypeptide reads, in one-letter code: Putative beta-neurotoxin (72 aa).

The first 7 residues, 1–7, serve as a signal peptide directing secretion; it reads IDMVVEC. The LCN-type CS-alpha/beta domain occupies 9–71; it reads KDGYLMEHDG…TWSRATNRCG (63 aa). 4 disulfides stabilise this stretch: cysteine 19–cysteine 70, cysteine 23–cysteine 45, cysteine 31–cysteine 51, and cysteine 35–cysteine 53.

In terms of tissue distribution, expressed by the venom gland.

It is found in the secreted. Its function is as follows. Beta toxins bind voltage-independently at site-4 of sodium channels (Nav) and shift the voltage of activation toward more negative potentials thereby affecting sodium channel activation and promoting spontaneous and repetitive firing. This Tityus pachyurus (Colombian scorpion) protein is Putative beta-neurotoxin.